An 809-amino-acid chain; its full sequence is DNA replication helicase (809 aa).

Position 72-79 (72-79) interacts with ATP; sequence GTAGAGKS.

The protein belongs to the herpesviridae helicase family. As to quaternary structure, associates with the primase and the primase-associated factor to form the helicase-primase complex.

The protein localises to the host nucleus. Functionally, component of the helicase/primase complex. Unwinds the DNA at the replication forks and generates single-stranded DNA for both leading and lagging strand synthesis. The primase synthesizes short RNA primers on the lagging strand that the polymerase elongates using dNTPs. Possesses helicase-like motifs and therefore may act as the helicase subunit of the complex. This chain is DNA replication helicase, found in Epstein-Barr virus (strain B95-8) (HHV-4).